The chain runs to 313 residues: Ribosomal RNA small subunit methyltransferase H (313 aa).

S-adenosyl-L-methionine-binding positions include 35–37 (GGH), Asp-55, Phe-79, Asp-101, and Gln-108.

It belongs to the methyltransferase superfamily. RsmH family.

The protein resides in the cytoplasm. It carries out the reaction cytidine(1402) in 16S rRNA + S-adenosyl-L-methionine = N(4)-methylcytidine(1402) in 16S rRNA + S-adenosyl-L-homocysteine + H(+). In terms of biological role, specifically methylates the N4 position of cytidine in position 1402 (C1402) of 16S rRNA. This Salmonella newport (strain SL254) protein is Ribosomal RNA small subunit methyltransferase H.